A 109-amino-acid chain; its full sequence is Profilin (109 aa).

The protein belongs to the profilin family. Multimer. Occurs in many kinds of cells as a complex with monomeric actin in a 1:1 ratio.

The protein resides in the cytoplasm. Its subcellular location is the cytoskeleton. Binds to actin and affects the structure of the cytoskeleton. At high concentrations, profilin prevents the polymerization of actin, whereas it enhances it at low concentrations. By binding to PIP2, it inhibits the formation of IP3 and DG. The protein is Profilin of Actinidia deliciosa (Kiwi).